Here is a 67-residue protein sequence, read N- to C-terminus: Conotoxin ArMLCL-012 (67 aa).

Residues 1-19 (MLCLPVFIILLLLASPAAS) form the signal peptide. Residues 20–45 (NPLEKRIQSDLIRAALEDADTKNDPR) constitute a propeptide that is removed on maturation. C64 carries the cysteine amide modification.

Belongs to the conotoxin T superfamily. Post-translationally, contains 2 disulfide bonds that can be either 'C1-C3, C2-C4' or 'C1-C4, C2-C3', since these disulfide connectivities have been observed for conotoxins with cysteine framework V (for examples, see AC P0DQQ7 and AC P81755). As to expression, expressed by the venom duct.

Its subcellular location is the secreted. The chain is Conotoxin ArMLCL-012 from Conus arenatus (Sand-dusted cone).